The following is a 557-amino-acid chain: Protein Red (557 aa).

A disordered region spans residues 1 to 90 (MPERDSEPFS…YAKLRQQEIE (90 aa)). The span at 16 to 25 (DGHDVDDPHS) shows a compositional bias: basic and acidic residues. Residues 42–53 (TPRAAPTSAPPS) show a composition bias toward low complexity. N6-acetyllysine occurs at positions 98 and 137. Residue lysine 151 forms a Glycyl lysine isopeptide (Lys-Gly) (interchain with G-Cter in SUMO2) linkage. The tract at residues 181–205 (KEKEEEELMEKPQKETKKDEDPENK) is disordered. Serine 287 carries the post-translational modification Phosphoserine. The span at 294-303 (RNKKLKKKDK) shows a compositional bias: basic residues. A disordered region spans residues 294–402 (RNKKLKKKDK…PMDVDKGPGS (109 aa)). The span at 304-313 (GKLEEKKPPE) shows a compositional bias: basic and acidic residues. Residues lysine 310 and lysine 331 each participate in a glycyl lysine isopeptide (Lys-Gly) (interchain with G-Cter in SUMO2) cross-link. Residues 332 to 398 (TPRDKERERY…VDDEPMDVDK (67 aa)) show a composition bias toward basic and acidic residues. 17 consecutive repeat copies span residues 342–343 (RE), 344–345 (RE), 346–347 (RD), 348–349 (RE), 350–351 (RD), 352–353 (RD), 354–355 (RE), 356–357 (RD), 358–359 (RE), 360–361 (RD), 362–363 (RE), 364–365 (RE), 366–367 (RE), 368–369 (RD), 370–371 (RE), 372–373 (RE), and 374–375 (RE). A 17 X 2 AA tandem repeats of R-[ED] region spans residues 342 to 375 (RERERDRERDRDRERDRERDRERERERDRERERE). Residues lysine 386, lysine 388, lysine 404, and lysine 408 each participate in a glycyl lysine isopeptide (Lys-Gly) (interchain with G-Cter in SUMO2) cross-link. Residues serine 417 and serine 460 each carry the phosphoserine modification. Residue threonine 485 is modified to Phosphothreonine. Glycyl lysine isopeptide (Lys-Gly) (interchain with G-Cter in SUMO2) cross-links involve residues lysine 496, lysine 501, and lysine 509. Serine 536 is modified (phosphoserine). Residues lysine 541, lysine 543, lysine 544, and lysine 553 each participate in a glycyl lysine isopeptide (Lys-Gly) (interchain with G-Cter in SUMO2) cross-link.

The protein belongs to the RED family. As to quaternary structure, component of the spliceosome B complex. Interacts with SMU1. Interacts with MAD1L1. May interact with DHX15.

Its subcellular location is the nucleus. It is found in the nucleoplasm. The protein localises to the chromosome. It localises to the cytoplasm. The protein resides in the cytoskeleton. Its subcellular location is the spindle pole. Functionally, involved in pre-mRNA splicing as a component of the spliceosome. Auxiliary spliceosomal protein that regulates selection of alternative splice sites in a small set of target pre-mRNA species. Required for normal mitotic cell cycle progression. Recruits MAD1L1 and MAD2L1 to kinetochores, and is required to trigger the spindle assembly checkpoint. Required for normal accumulation of SMU1. This is Protein Red (Ik) from Rattus norvegicus (Rat).